We begin with the raw amino-acid sequence, 453 residues long: F-box protein At4g27050 (453 aa).

Residues 3–51 enclose the F-box domain; sequence TDLISNLPDDVLGKILSLVPTKLAAATSVLSKRWRNLLPLVDSLDFDET.

As to quaternary structure, part of a SCF (ASK-cullin-F-box) protein ligase complex.

It functions in the pathway protein modification; protein ubiquitination. Component of SCF(ASK-cullin-F-box) E3 ubiquitin ligase complexes, which may mediate the ubiquitination and subsequent proteasomal degradation of target proteins. The sequence is that of F-box protein At4g27050 from Arabidopsis thaliana (Mouse-ear cress).